A 382-amino-acid polypeptide reads, in one-letter code: Bifunctional enzyme IspD/IspF (382 aa).

The 2-C-methyl-D-erythritol 4-phosphate cytidylyltransferase stretch occupies residues 1-226 (MTLAVLIVAA…RSTMDNIPDI (226 aa)). The segment at 227 to 382 (RLGNGYDVHR…ALATATLVRA (156 aa)) is 2-C-methyl-D-erythritol 2,4-cyclodiphosphate synthase. Residues Asp233 and His235 each contribute to the a divalent metal cation site. Residues 233 to 235 (DVH) and 259 to 260 (HS) contribute to the 4-CDP-2-C-methyl-D-erythritol 2-phosphate site. An a divalent metal cation-binding site is contributed by His267. 4-CDP-2-C-methyl-D-erythritol 2-phosphate-binding positions include 281 to 283 (DIG), 357 to 360 (TTSE), Phe364, and Arg367.

It in the N-terminal section; belongs to the IspD/TarI cytidylyltransferase family. IspD subfamily. This sequence in the C-terminal section; belongs to the IspF family. Requires a divalent metal cation as cofactor.

It catalyses the reaction 2-C-methyl-D-erythritol 4-phosphate + CTP + H(+) = 4-CDP-2-C-methyl-D-erythritol + diphosphate. It carries out the reaction 4-CDP-2-C-methyl-D-erythritol 2-phosphate = 2-C-methyl-D-erythritol 2,4-cyclic diphosphate + CMP. It participates in isoprenoid biosynthesis; isopentenyl diphosphate biosynthesis via DXP pathway; isopentenyl diphosphate from 1-deoxy-D-xylulose 5-phosphate: step 2/6. The protein operates within isoprenoid biosynthesis; isopentenyl diphosphate biosynthesis via DXP pathway; isopentenyl diphosphate from 1-deoxy-D-xylulose 5-phosphate: step 4/6. Functionally, bifunctional enzyme that catalyzes the formation of 4-diphosphocytidyl-2-C-methyl-D-erythritol from CTP and 2-C-methyl-D-erythritol 4-phosphate (MEP) (IspD), and catalyzes the conversion of 4-diphosphocytidyl-2-C-methyl-D-erythritol 2-phosphate (CDP-ME2P) to 2-C-methyl-D-erythritol 2,4-cyclodiphosphate (ME-CPP) with a corresponding release of cytidine 5-monophosphate (CMP) (IspF). The protein is Bifunctional enzyme IspD/IspF of Ruegeria sp. (strain TM1040) (Silicibacter sp.).